The sequence spans 1823 residues: THO complex subunit 2 (1823 aa).

Positions 935–1003 (NRYESEISKQ…RRRLSREKDT (69 aa)) form a coiled coil. The Nuclear localization signal signature appears at 964-969 (KRKKEK). Disordered stretches follow at residues 1244–1382 (LVGV…KDLN) and 1394–1823 (ALSS…GSRE). Composition is skewed to basic and acidic residues over residues 1272–1283 (QMLKTKPLDGRT), 1312–1330 (KSME…DENP), and 1356–1367 (AKQDFGKDDGKS). Residues 1394–1409 (ALSSTAANGSIATGSS) are compositionally biased toward polar residues. A compositionally biased stretch (basic and acidic residues) spans 1432-1596 (PRHEIVTSVR…EKSHPDDHFH (165 aa)). Residues 1600-1610 (LPPPPPLPPNI) show a composition bias toward pro residues. Composition is skewed to basic and acidic residues over residues 1616-1625 (AAKEDLERRA), 1636-1648 (PRHE…RSEE), 1655-1706 (DDAK…FEAS), and 1768-1785 (LGKE…DPIA). A phosphoserine mark is found at serine 1646 and serine 1696. Positions 1802-1816 (MTVNGKTTRGEQSGS) are enriched in polar residues.

The protein belongs to the THOC2 family. Component of the THO complex, which is composed of THO1, THO2, THO3, THO5, THO6 and THO7.

The protein resides in the nucleus. Its function is as follows. Acts as a component of the THO subcomplex of the TREX complex which is thought to couple mRNA transcription, processing and nuclear export. This Arabidopsis thaliana (Mouse-ear cress) protein is THO complex subunit 2 (THO2).